A 350-amino-acid chain; its full sequence is Protein RecA (350 aa).

67–74 serves as a coordination point for ATP; sequence GPESSGKT.

This sequence belongs to the RecA family.

The protein localises to the cytoplasm. Functionally, can catalyze the hydrolysis of ATP in the presence of single-stranded DNA, the ATP-dependent uptake of single-stranded DNA by duplex DNA, and the ATP-dependent hybridization of homologous single-stranded DNAs. It interacts with LexA causing its activation and leading to its autocatalytic cleavage. In Wolinella succinogenes (strain ATCC 29543 / DSM 1740 / CCUG 13145 / JCM 31913 / LMG 7466 / NCTC 11488 / FDC 602W) (Vibrio succinogenes), this protein is Protein RecA.